Reading from the N-terminus, the 339-residue chain is Enhancer of mRNA-decapping protein 1 (339 aa).

2 disordered regions span residues 1 to 240 and 309 to 339; these read MMMH…PPRY and FPVNAQPPAHVGSAPQGQKISFDDLLGSAKK. Residues 13–25 are compositionally biased toward polar residues; the sequence is SPGSENHSNPASR. 2 stretches are compositionally biased toward basic and acidic residues: residues 26–38 and 91–100; these read EQSKPKKETERRL and DNKEKNKKLL. Residues 111–131 show a composition bias toward low complexity; sequence NFSFYSESNSNSNSNVSSNSN. A compositionally biased stretch (basic and acidic residues) spans 163–173; that stretch reads RPDKNGKKGPV. Positions 196-212 are enriched in polar residues; sequence FQRTSPKQQANTINDEN. Residues 213 to 237 are compositionally biased toward low complexity; sequence SSPSSSASSVSMSSPRPVAGAVAAP.

The protein belongs to the EDC family.

Its subcellular location is the cytoplasm. In terms of biological role, mRNA-binding protein which stimulates mRNA decapping. The sequence is that of Enhancer of mRNA-decapping protein 1 (EDC1) from Scheffersomyces stipitis (strain ATCC 58785 / CBS 6054 / NBRC 10063 / NRRL Y-11545) (Yeast).